The sequence spans 344 residues: Heat-inducible transcription repressor HrcA (344 aa).

This sequence belongs to the HrcA family.

In terms of biological role, negative regulator of class I heat shock genes (grpE-dnaK-dnaJ and groELS operons). Prevents heat-shock induction of these operons. The chain is Heat-inducible transcription repressor HrcA from Streptococcus pneumoniae (strain P1031).